The primary structure comprises 1436 residues: Inositol hexakisphosphate and diphosphoinositol-pentakisphosphate kinase 1 (1436 aa).

64 to 65 (KK) lines the substrate pocket. Residues Arg145, Lys198, His205, Arg224, 248-251 (EEFM), and 257-259 (DVK) contribute to the ATP site. 224–225 (RK) lines the substrate pocket. Residues Lys259 and Arg273 each contribute to the substrate site. ATP is bound by residues Ser275, Asp320, and 332–334 (DVN). 337-340 (SFVK) lines the substrate pocket. Residues 382–453 (PTTSGTMMEL…VLDITRLLLA (72 aa)) form a polyphosphoinositide-binding domain region. The disordered stretch occupies residues 915-998 (GSAPAGCGFR…TSSSRPGGYR (84 aa)). A phosphoserine mark is found at Ser939, Ser982, Ser1032, Ser1068, Ser1140, and Ser1147. 2 disordered regions span residues 1131-1191 (NHQA…GFSD) and 1389-1436 (SELS…EAIS). The span at 1163-1181 (SSGPSSTVSSAGPSSPTTV) shows a compositional bias: low complexity. A compositionally biased stretch (acidic residues) spans 1405 to 1436 (LSEETELQAQEVSEEIDQESEVVDELPPEAIS).

This sequence belongs to the histidine acid phosphatase family. VIP1 subfamily.

It is found in the cytoplasm. The protein localises to the cytosol. The protein resides in the cell membrane. The catalysed reaction is 1D-myo-inositol hexakisphosphate + ATP = 1-diphospho-1D-myo-inositol 2,3,4,5,6-pentakisphosphate + ADP. The enzyme catalyses 5-diphospho-1D-myo-inositol 1,2,3,4,6-pentakisphosphate + ATP + H(+) = 1,5-bis(diphospho)-1D-myo-inositol 2,3,4,6-tetrakisphosphate + ADP. In terms of biological role, bifunctional inositol kinase that acts in concert with the IP6K kinases IP6K1, IP6K2 and IP6K3 to synthesize the diphosphate group-containing inositol pyrophosphates diphosphoinositol pentakisphosphate, PP-InsP5, and bis-diphosphoinositol tetrakisphosphate, (PP)2-InsP4. PP-InsP5 and (PP)2-InsP4, also respectively called InsP7 and InsP8, regulate a variety of cellular processes, including apoptosis, vesicle trafficking, cytoskeletal dynamics, exocytosis, insulin signaling and neutrophil activation. Phosphorylates inositol hexakisphosphate (InsP6) at position 1 to produce PP-InsP5 which is in turn phosphorylated by IP6Ks to produce (PP)2-InsP4. Alternatively, phosphorylates PP-InsP5 at position 1, produced by IP6Ks from InsP6, to produce (PP)2-InsP4. Activated when cells are exposed to hyperosmotic stress. The polypeptide is Inositol hexakisphosphate and diphosphoinositol-pentakisphosphate kinase 1 (Mus musculus (Mouse)).